Consider the following 486-residue polypeptide: Aspartyl/glutamyl-tRNA(Asn/Gln) amidotransferase subunit B (486 aa).

Belongs to the GatB/GatE family. GatB subfamily. As to quaternary structure, heterotrimer of A, B and C subunits.

It catalyses the reaction L-glutamyl-tRNA(Gln) + L-glutamine + ATP + H2O = L-glutaminyl-tRNA(Gln) + L-glutamate + ADP + phosphate + H(+). The enzyme catalyses L-aspartyl-tRNA(Asn) + L-glutamine + ATP + H2O = L-asparaginyl-tRNA(Asn) + L-glutamate + ADP + phosphate + 2 H(+). Functionally, allows the formation of correctly charged Asn-tRNA(Asn) or Gln-tRNA(Gln) through the transamidation of misacylated Asp-tRNA(Asn) or Glu-tRNA(Gln) in organisms which lack either or both of asparaginyl-tRNA or glutaminyl-tRNA synthetases. The reaction takes place in the presence of glutamine and ATP through an activated phospho-Asp-tRNA(Asn) or phospho-Glu-tRNA(Gln). In Janthinobacterium sp. (strain Marseille) (Minibacterium massiliensis), this protein is Aspartyl/glutamyl-tRNA(Asn/Gln) amidotransferase subunit B.